Reading from the N-terminus, the 429-residue chain is UDP-N-acetylglucosamine 1-carboxyvinyltransferase (429 aa).

22–23 (KN) lines the phosphoenolpyruvate pocket. Arg-102 contributes to the UDP-N-acetyl-alpha-D-glucosamine binding site. Catalysis depends on Cys-126, which acts as the Proton donor. Cys-126 is subject to 2-(S-cysteinyl)pyruvic acid O-phosphothioketal. UDP-N-acetyl-alpha-D-glucosamine contacts are provided by residues 171-174 (KVSV), Asp-316, and Ile-338.

Belongs to the EPSP synthase family. MurA subfamily.

It is found in the cytoplasm. It carries out the reaction phosphoenolpyruvate + UDP-N-acetyl-alpha-D-glucosamine = UDP-N-acetyl-3-O-(1-carboxyvinyl)-alpha-D-glucosamine + phosphate. It functions in the pathway cell wall biogenesis; peptidoglycan biosynthesis. Cell wall formation. Adds enolpyruvyl to UDP-N-acetylglucosamine. The chain is UDP-N-acetylglucosamine 1-carboxyvinyltransferase from Xanthobacter autotrophicus (strain ATCC BAA-1158 / Py2).